The chain runs to 124 residues: Hydrogenase maturation factor HypA (124 aa).

Ni(2+) is bound at residue H2. Zn(2+) contacts are provided by C78, C81, C97, and C100.

This sequence belongs to the HypA/HybF family.

Its function is as follows. Involved in the maturation of [NiFe] hydrogenases. Required for nickel insertion into the metal center of the hydrogenase. The polypeptide is Hydrogenase maturation factor HypA (Methanocaldococcus jannaschii (strain ATCC 43067 / DSM 2661 / JAL-1 / JCM 10045 / NBRC 100440) (Methanococcus jannaschii)).